The sequence spans 651 residues: MGQIFSRSASPIPRPPRGLAAHHWLNFLQAAYRLEPGPSSYDFHQLKKFLKIALETPARICPINYSLLASLLPKGYPGRVNEILHILIQTQAQIPSRPAPPPPSSPTHDPPDSDPQIPPPYVEPTAPQVLPVMHPHGAPPNHRPWQMKDLQAIKQEVSQAAPGSPQFMQTIRLAVQQFDPTAKDLQDLLQYLCSSLVASLHHQQLDSLISEAETRGITGYNPLAGPLRVQANNPQQQGLRREYQQLWLAAFAALPGSAKDPSWASILQGLEEPYHAFVERLNIALDNGLPEGTPKDPILRSLAYSNANKECQKLLQARGHTNSPLGDMLRACQTWTPKDKTKVLVVQPKKPPPNQPCFRCGKAGHWSRDCTQPRPPPGPCPLCQDPTHWKRDCPRLKPTIPEPEPEEDALLLDLPADIPHPKNLHRGGGLTSPPTLQQVLPNQDPASILPVIPLDPARRPVIKAQVDTQTSHPKTIEALLDTGADMTVLPIALFSSNTPLKNTSVLGAGGQTQDHFKLTSLPVLIRLPFRTTPIVLTSCLVDTKNNWAIIGRDALQQCQGVLYLPEAKRPPVILPIQAPAVLGLEHLPRPPEISQFPLNQNASRPCNTWSGRPWRQAISNPTPGQGITQYSQLKRPMEPGDSSTTCGPLTL.

The N-myristoyl glycine; by host moiety is linked to residue glycine 2. The disordered stretch occupies residues 93–144 (QIPSRPAPPPPSSPTHDPPDSDPQIPPPYVEPTAPQVLPVMHPHGAPPNHRP). At serine 105 the chain carries Phosphoserine; by host MAPK1. Positions 118–121 (PPPY) match the PPXY motif motif. The short motif at 124–127 (PTAP) is the PTAP/PSAP motif element. 2 CCHC-type zinc fingers span residues 355-372 (QPCFRCGKAGHWSRDCTQ) and 378-395 (GPCPLCQDPTHWKRDCPR). The Peptidase A2 domain maps to 476-554 (IEALLDTGAD…NNWAIIGRDA (79 aa)). The active-site For protease activity; shared with dimeric partner is the aspartate 481.

In terms of assembly, homodimer; the homodimers are part of the immature particles. Interacts with human TSG101 and NEDD4; these interactions are essential for budding and release of viral particles. Homodimer; further assembles as homohexamers. Post-translationally, specific enzymatic cleavages by the viral protease yield mature proteins. The polyprotein is cleaved during and after budding, this process is termed maturation. The protease is autoproteolytically processed at its N- and C-termini. In terms of processing, phosphorylation of the matrix protein p19 by MAPK1 seems to play a role in budding. Myristoylated. Myristoylation of the matrix (MA) domain mediates the transport and binding of Gag polyproteins to the host plasma membrane and is required for the assembly of viral particles.

It localises to the virion. Its function is as follows. The matrix domain targets Gag, Gag-Pro and Gag-Pro-Pol polyproteins to the plasma membrane via a multipartite membrane binding signal, that includes its myristoylated N-terminus. In terms of biological role, matrix protein. Functionally, forms the spherical core of the virus that encapsulates the genomic RNA-nucleocapsid complex. Binds strongly to viral nucleic acids and promote their aggregation. Also destabilizes the nucleic acids duplexes via highly structured zinc-binding motifs. Its function is as follows. The aspartyl protease mediates proteolytic cleavages of Gag and Gag-Pol polyproteins during or shortly after the release of the virion from the plasma membrane. Cleavages take place as an ordered, step-wise cascade to yield mature proteins. This process is called maturation. Displays maximal activity during the budding process just prior to particle release from the cell. Cleaves the translation initiation factor eIF4G leading to the inhibition of host cap-dependent translation. This is Gag-Pro polyprotein (gag-pro) from Human T-cell leukemia virus 1 (strain Japan ATK-1 subtype A) (HTLV-1).